Here is a 447-residue protein sequence, read N- to C-terminus: N-succinylarginine dihydrolase (447 aa).

Residues 19–28, asparagine 110, and 137–138 contribute to the substrate site; these read AGLSFGNEAS and HR. Glutamate 174 is a catalytic residue. Arginine 213 contacts substrate. The active site involves histidine 249. Residues aspartate 251 and asparagine 364 each contribute to the substrate site. The active-site Nucleophile is the cysteine 370.

This sequence belongs to the succinylarginine dihydrolase family. In terms of assembly, homodimer.

The enzyme catalyses N(2)-succinyl-L-arginine + 2 H2O + 2 H(+) = N(2)-succinyl-L-ornithine + 2 NH4(+) + CO2. The protein operates within amino-acid degradation; L-arginine degradation via AST pathway; L-glutamate and succinate from L-arginine: step 2/5. Its function is as follows. Catalyzes the hydrolysis of N(2)-succinylarginine into N(2)-succinylornithine, ammonia and CO(2). The chain is N-succinylarginine dihydrolase from Yersinia enterocolitica serotype O:8 / biotype 1B (strain NCTC 13174 / 8081).